A 154-amino-acid chain; its full sequence is Large ribosomal subunit protein uL30 (154 aa).

Belongs to the universal ribosomal protein uL30 family. In terms of assembly, part of the 50S ribosomal subunit.

In Methanococcus maripaludis (strain DSM 14266 / JCM 13030 / NBRC 101832 / S2 / LL), this protein is Large ribosomal subunit protein uL30.